The primary structure comprises 456 residues: 26S proteasome non-ATPase regulatory subunit 12 (456 aa).

A2 carries the post-translational modification N-acetylalanine. Residue K92 forms a Glycyl lysine isopeptide (Lys-Gly) (interchain with G-Cter in SUMO1); alternate linkage. K92 participates in a covalent cross-link: Glycyl lysine isopeptide (Lys-Gly) (interchain with G-Cter in SUMO2); alternate. 2 positions are modified to N6-acetyllysine: K221 and K368. Residues 242–420 (SICKHYRAIY…GIINFQRPKD (179 aa)) enclose the PCI domain.

The protein belongs to the proteasome subunit p55 family. In terms of assembly, component of the 19S proteasome regulatory particle complex. The 26S proteasome consists of a 20S core particle (CP) and two 19S regulatory subunits (RP). The regulatory particle is made of a lid composed of 9 subunits including PSMD12, a base containing 6 ATPases and few additional components. Interacts with ERCC6.

In terms of biological role, component of the 26S proteasome, a multiprotein complex involved in the ATP-dependent degradation of ubiquitinated proteins. This complex plays a key role in the maintenance of protein homeostasis by removing misfolded or damaged proteins, which could impair cellular functions, and by removing proteins whose functions are no longer required. Therefore, the proteasome participates in numerous cellular processes, including cell cycle progression, apoptosis, or DNA damage repair. The polypeptide is 26S proteasome non-ATPase regulatory subunit 12 (PSMD12) (Pongo abelii (Sumatran orangutan)).